Here is a 199-residue protein sequence, read N- to C-terminus: MTHNPNIIWHPAAISKSDRQSLNGHKSCVLWFTGLSGSGKSVLANAVDEKLYRKGIQSYVLDGDNIRHGLNKDLGFQTGDRIENIRRIGEVAKLFVDSGQMILTAFISPFREDRDMVRALFPKGEFFEIYVKCPLHVCEQRDPKGLYKKARNGEIKHFTGIDSPYEAPLSPDFIIESDQTSISDGADLIINALQNRGII.

Residue 34–41 (GLSGSGKS) coordinates ATP. Serine 108 (phosphoserine intermediate) is an active-site residue.

This sequence belongs to the APS kinase family.

It carries out the reaction adenosine 5'-phosphosulfate + ATP = 3'-phosphoadenylyl sulfate + ADP + H(+). The protein operates within sulfur metabolism; hydrogen sulfide biosynthesis; sulfite from sulfate: step 2/3. Its function is as follows. Catalyzes the synthesis of activated sulfate. The polypeptide is Probable adenylyl-sulfate kinase (yisZ) (Bacillus subtilis (strain 168)).